The chain runs to 1199 residues: MLDVNNFEYMNIGLASPDKIRSWSFGEVKKPETINYRTLKPEKDGLFCERIFGPTKDWECHCGKYKRVRYKGVVCDRCGVEVTRAKVRRERMGHIELAAPVSHIWYFKGIPSRMGLVLDMSPRALEEVIYFASYVVTDPANTPLEKKQLLSEKEYRAYLDKYGNKFQASMGAEAIHKLLQDIDLVKEVDMLKEELKTSQGQRRTRAIKRLEVLEAFRNSGNKPSWMILDVLPVIPPELRPMVQLDGGRFATSDLNDLYRRVINRNNRLKRLLDLGAPSIIVQNEKRMLQEAVDALIDNGRRGRPVTGPGNRPLKSLSHMLKGKQGRFRQNLLGKRVDYSGRSVIVVGPHLKMYQCGLPKEMALELFKPFVMKELVEKGLAHNIKSAKRKIERVQPEVWDVLESVIKEHPVLLNRAPTLHRLGIQAFEPTLVEGRAIRLHPLVCTAYNADFDGDQMAVHVPLSAEAQAEARILMLAAQNILNPKDGKPVVTPSQDMVLGNYYLTLERAGAVGEGMVFKNTDEALLAYQNGYVHLHTRVAVAANSLKNVTFTEEQRSKLLITTVGKLVFNEILPESFPYMNEPTKSNIEEKTPDRFFLEKGADVKAVIAQQPINAPFKKGILGKIIAEIFKRFHITETSKMLDRMKNLGFKYSTKAGITVGVSDIVVLDDKQEILEEAQSKVDNVMKQFRRGLITEEERYERVISIWSAAKDVIQGKLMKSLDELNPIYMMSDSGARGNASNFTQLAGMRGLMANPAGRIIELPIKSSFREGLTVLEYFISTHGARKGLADTALKTADSGYLTRRLVDVAQDVIIRETDCGTDRGILAKPLKEGTETIERLEERLIGRFARKQVKHPETGEVLVNENELIDEDKALEIVEAGIEEVWIRSAFTCNTPHGVCKRCYGRNLATGSDVEVGEAVGIIAAQSIGEPGTQLTMRTFHTGGVAGDDITQGLPRIQELFEARNPKGQATITEIDGTVVEINEVRDKQQEIVVQGAVETRSYTAPYNSRLKVAEGDKITRGQVLTEGSIDPKELLKVTDLTTVQEYLLHEVQKVYRMQGVEIGDKHVEVMVRQMLRKVRVIDAGDTDVLPGTLLDIHQFTEANKKVLLEGNRPATGRPVLLGITKASLETDSFLSAASFQETTRVLTDAAIKGKRDELLGLKENVIIGKLVPAGTGMMKYRKVKPVSNVQPTDDMVPVE.

Cys60, Cys62, Cys75, and Cys78 together coordinate Zn(2+). Mg(2+)-binding residues include Asp449, Asp451, and Asp453. Zn(2+) is bound by residues Cys818, Cys892, Cys899, and Cys902.

It belongs to the RNA polymerase beta' chain family. RNAP is composed of a core of 2 alpha, a beta and a beta' subunit. The core is associated with a delta subunit, and at least one of epsilon or omega. When a sigma factor is associated with the core the holoenzyme is formed, which can initiate transcription. It depends on Mg(2+) as a cofactor. Requires Zn(2+) as cofactor.

The catalysed reaction is RNA(n) + a ribonucleoside 5'-triphosphate = RNA(n+1) + diphosphate. Its function is as follows. DNA-dependent RNA polymerase catalyzes the transcription of DNA into RNA using the four ribonucleoside triphosphates as substrates. The polypeptide is DNA-directed RNA polymerase subunit beta' (Bacillus subtilis (strain 168)).